Consider the following 438-residue polypeptide: GTPase Der (438 aa).

EngA-type G domains lie at 2–164 (HKVA…PEDD) and 173–343 (IRIS…EKWQ). GTP-binding positions include 8-15 (GRPNVGKS), 55-59 (DTGGL), 116-119 (NKID), 179-186 (GRPNVGKS), 226-230 (DTAGI), and 288-291 (NKWD). Residues 344–428 (SRIGTSELNR…PVRLKWKEKG (85 aa)) enclose the KH-like domain.

It belongs to the TRAFAC class TrmE-Era-EngA-EngB-Septin-like GTPase superfamily. EngA (Der) GTPase family. Associates with the 50S ribosomal subunit.

Functionally, GTPase that plays an essential role in the late steps of ribosome biogenesis. The sequence is that of GTPase Der from Deinococcus radiodurans (strain ATCC 13939 / DSM 20539 / JCM 16871 / CCUG 27074 / LMG 4051 / NBRC 15346 / NCIMB 9279 / VKM B-1422 / R1).